A 355-amino-acid polypeptide reads, in one-letter code: 3-dehydroquinate synthase (355 aa).

NAD(+)-binding positions include 71 to 76 (EGEERK), 105 to 109 (GVVGD), 129 to 130 (TS), lysine 142, and lysine 151. Zn(2+) is bound by residues glutamate 184, histidine 246, and histidine 263.

The protein belongs to the sugar phosphate cyclases superfamily. Dehydroquinate synthase family. It depends on Co(2+) as a cofactor. Requires Zn(2+) as cofactor. NAD(+) is required as a cofactor.

It is found in the cytoplasm. The enzyme catalyses 7-phospho-2-dehydro-3-deoxy-D-arabino-heptonate = 3-dehydroquinate + phosphate. It functions in the pathway metabolic intermediate biosynthesis; chorismate biosynthesis; chorismate from D-erythrose 4-phosphate and phosphoenolpyruvate: step 2/7. Catalyzes the conversion of 3-deoxy-D-arabino-heptulosonate 7-phosphate (DAHP) to dehydroquinate (DHQ). This is 3-dehydroquinate synthase from Streptococcus pneumoniae serotype 19F (strain G54).